Consider the following 599-residue polypeptide: Bile salt-activated lipase (599 aa).

The first 20 residues, 1–20, serve as a signal peptide directing secretion; it reads MGRLEVLFLGLTCCLAAACA. Cysteine 84 and cysteine 100 are disulfide-bonded. An N-linked (GlcNAc...) asparagine glycan is attached at asparagine 207. Serine 214 serves as the catalytic Acyl-ester intermediate. Cysteine 266 and cysteine 277 are joined by a disulfide. Residue asparagine 325 is glycosylated (N-linked (GlcNAc...) asparagine). Catalysis depends on charge relay system residues aspartate 340 and histidine 455. The tract at residues 553-599 is disordered; it reads TGDQDTLTPPEDDSEVAPDPPSDDSQVVPVPPTDDSVEAQMPATIGF. 3 tandem repeats follow at residues 559–569, 570–580, and 581–588. The interval 559–588 is 4 X 11 AA tandem repeats, O-glycosylated region; sequence LTPPEDDSEVAPDPPSDDSQVVPVPPTDDS.

This sequence belongs to the type-B carboxylesterase/lipase family. In terms of assembly, interacts with CLC. EXpressed by eosinophils.

The protein resides in the secreted. It catalyses the reaction a triacylglycerol + H2O = a diacylglycerol + a fatty acid + H(+). The enzyme catalyses 1,2,3-tri-(9Z-octadecenoyl)-glycerol + H2O = di-(9Z)-octadecenoylglycerol + (9Z)-octadecenoate + H(+). It carries out the reaction 1,2,3-trioctanoylglycerol + H2O = dioctanoylglycerol + octanoate + H(+). The catalysed reaction is a sterol ester + H2O = a sterol + a fatty acid + H(+). It catalyses the reaction an acetyl ester + H2O = an aliphatic alcohol + acetate + H(+). The enzyme catalyses a butanoate ester + H2O = an aliphatic alcohol + butanoate + H(+). It carries out the reaction 9-hexadecanoyloxy-octadecanoate + H2O = 9-hydroxy-octadecanoate + hexadecanoate + H(+). The catalysed reaction is 9-(9Z-octadecenoyloxy)-octadecanoate + H2O = 9-hydroxy-octadecanoate + (9Z)-octadecenoate + H(+). It catalyses the reaction cholesteryl (9Z-octadecenoate) + H2O = cholesterol + (9Z)-octadecenoate + H(+). The enzyme catalyses 1-hexadecanoyl-sn-glycero-3-phosphocholine + H2O = sn-glycerol 3-phosphocholine + hexadecanoate + H(+). It carries out the reaction 12-hexadecanoyloxy-octadecanoate + H2O = 12-hydroxyoctadecanoate + hexadecanoate + H(+). The catalysed reaction is 12-(9Z-octadecenoyloxy)-octadecanoate + H2O = 12-hydroxyoctadecanoate + (9Z)-octadecenoate + H(+). It catalyses the reaction 13-(9Z-octadecenoyloxy)-octadecanoate + H2O = 13-hydroxy-octadecanoate + (9Z)-octadecenoate + H(+). The enzyme catalyses 9-(9Z-hexadecenoyloxy)-octadecanoate + H2O = (9Z)-hexadecenoate + 9-hydroxy-octadecanoate + H(+). It carries out the reaction 12-(9Z-hexadecenoyloxy)-octadecanoate + H2O = 12-hydroxyoctadecanoate + (9Z)-hexadecenoate + H(+). The catalysed reaction is 13-(9Z-hexadecenoyloxy)-octadecanoate + H2O = 13-hydroxy-octadecanoate + (9Z)-hexadecenoate + H(+). It catalyses the reaction 12-octadecanoyloxy-octadecanoate + H2O = 12-hydroxyoctadecanoate + octadecanoate + H(+). The enzyme catalyses 13-octadecanoyloxy-octadecanoate + H2O = 13-hydroxy-octadecanoate + octadecanoate + H(+). It carries out the reaction 5-(9Z-hexadecenoyloxy)-octadecanoate + H2O = 5-hydroxy-octadecanoate + (9Z)-hexadecenoate + H(+). The catalysed reaction is 9-octadecanoyloxy-octadecanoate + H2O = 9-hydroxy-octadecanoate + octadecanoate + H(+). Activated by bile salts such as sodium taurocholate. In terms of biological role, catalyzes the hydrolysis of a wide range of substrates including cholesteryl esters, phospholipids, lysophospholipids, di- and tri-acylglycerols, and fatty acid esters of hydroxy fatty acids (FAHFAs). Preferentially hydrolyzes FAHFAs with the ester bond further away from the carboxylate. Unsaturated FAHFAs are hydrolyzed more quickly than saturated FAHFAs. Has an essential role in the complete digestion of dietary lipids and their intestinal absorption, along with the absorption of fat-soluble vitamins. This is Bile salt-activated lipase (Cel) from Mus musculus (Mouse).